The following is a 561-amino-acid chain: Methionine--tRNA ligase (561 aa).

Residues 11–21 carry the 'HIGH' region motif; sequence PYVNTVPHLGN. Zn(2+) is bound by residues C143, C146, C156, and C159. K334 contacts ATP.

This sequence belongs to the class-I aminoacyl-tRNA synthetase family. MetG type 1 subfamily. It depends on Zn(2+) as a cofactor.

The protein resides in the cytoplasm. It catalyses the reaction tRNA(Met) + L-methionine + ATP = L-methionyl-tRNA(Met) + AMP + diphosphate. Functionally, is required not only for elongation of protein synthesis but also for the initiation of all mRNA translation through initiator tRNA(fMet) aminoacylation. In Ignicoccus hospitalis (strain KIN4/I / DSM 18386 / JCM 14125), this protein is Methionine--tRNA ligase.